Here is a 510-residue protein sequence, read N- to C-terminus: MIWHVQNENFILDSTRIFMKAFHLLLFDGSLIFPECILIFGLILLLMIDSTSDQKDIPWLYFISSTSLVMSITSLLFRWREEPMISFSGNFQTNNFNEIFQFLILLCSTLCIPLSVEYIECTEMAITEFLLFVLTATIGGMFLCGANDLITIFVAPECFSLCSYLLSGYTKKDVRSNEATMKYLLMGGASSSILVHGFSWLYGSSGGEIELQEIVNGLINTQMYNSPGISIALIFITVGIGFKLSPAPSHQWTPDVYEGSPTPVVAFLSVTSKVAASASATRIFDIPFYFSSNEWHLLLEILAILSMILGNLIAITQTSMKRMLAYSSIGQIGYVIIGIIVGDSNDGYASMITYMLFYISMNLGTFACIVLFGLRTGTENIRDYAGLYTKDPFLALSLALCLLSLGGLPPLAGFFGKLYLFWCGWQAGLYFLVLIGLLTSVVSIYYYLKIIKLLMTGRNQEITPHVRNYRRSPLRSNNSIELSMIVCVIASTIPGISMNPIIAIAQDTLF.

13 consecutive transmembrane segments (helical) span residues leucine 24–leucine 44, isoleucine 57–phenylalanine 77, isoleucine 99–isoleucine 119, methionine 124–cysteine 144, leucine 149–tyrosine 169, tyrosine 183–glycine 203, proline 227–alanine 247, tryptophan 295–isoleucine 315, methionine 323–aspartate 343, tyrosine 354–leucine 374, alanine 395–phenylalanine 415, leucine 418–leucine 438, and methionine 484–isoleucine 504.

Belongs to the complex I subunit 2 family. NDH is composed of at least 16 different subunits, 5 of which are encoded in the nucleus.

Its subcellular location is the plastid. The protein localises to the chloroplast thylakoid membrane. It catalyses the reaction a plastoquinone + NADH + (n+1) H(+)(in) = a plastoquinol + NAD(+) + n H(+)(out). The catalysed reaction is a plastoquinone + NADPH + (n+1) H(+)(in) = a plastoquinol + NADP(+) + n H(+)(out). Functionally, NDH shuttles electrons from NAD(P)H:plastoquinone, via FMN and iron-sulfur (Fe-S) centers, to quinones in the photosynthetic chain and possibly in a chloroplast respiratory chain. The immediate electron acceptor for the enzyme in this species is believed to be plastoquinone. Couples the redox reaction to proton translocation, and thus conserves the redox energy in a proton gradient. This Lactuca sativa (Garden lettuce) protein is NAD(P)H-quinone oxidoreductase subunit 2 B, chloroplastic.